A 774-amino-acid polypeptide reads, in one-letter code: MTPLRVFRKTTPLVNTIRLSLLPLAGLSFSAFAAQVNIAPGSLDKALNQYAAHSGFTLSVDASLTRGKQSNGLHGDYDVESGLQQLLDGSGLQVKPLGNNSWTLEPAPAPKEDALTVVGDWLGDARENDVFEHAGARDVIRREDFAKTGATTMREVLNRIPGVSAPENNGTGSHDLAMNFGIRGLNPRLASRSTVLMDGIPVPFAPYGQPQLSLAPVSLGNMDAIDVVRGGGAVRYGPQSVGGVVNFVTRAIPQDFGIEAGVEGQLSPTSSQNNPKETHNLMVGGTADNGFGTALLYSGTRGSDWREHSATRIDDLMLKSKYAPDEVHTFNSLLQYYDGEADMPGGLSRADYDADRWQSTRPYDRFWGRRKLASLGYQFQPDSQHKFNIQGFYTQTLRSGYLEQGKRITLSPRNYWVRGIEPRYSQIFMIGPSAHEVGVGYRYLNESTHEMRYYTATSSGQLPSGSSPYDRDTRSGTEAHAWYLDDKIDIGNWTITPGMRFEHIESYQNNAITGTHEEVSYNAPLPALNVLYHLTDSWNLYANTEGSFGTVQYSQIGKAVQSGNVEPEKARTWELGTRYDDGALTAEMGLFLINFNNQYDSNQTNDTVTARGKTRHTGLETQARYDLGTLTPTLDNVSIYASYAYVNAEIREKGDTYGNLVPFSPKHKGTLGVDYKPGNWTFNLNSDFQSSQFADNANTVKESADGSTGRIPGFMLWGARVAYDFGPQMADLNLAFGVKNIFDQDYFIRSYDDNNKGIYAGQPRTLYMQGSLKF.

Residues 1 to 33 form the signal peptide; sequence MTPLRVFRKTTPLVNTIRLSLLPLAGLSFSAFA. The TonB box signature appears at 56-63; sequence FTLSVDAS. The region spanning 129–250 is the TBDR plug domain; sequence DVFEHAGARD…VGGVVNFVTR (122 aa). The TBDR beta-barrel domain maps to 255 to 774; the sequence is DFGIEAGVEG…TLYMQGSLKF (520 aa). The short motif at 757–774 is the TonB C-terminal box element; the sequence is GIYAGQPRTLYMQGSLKF.

The protein belongs to the TonB-dependent receptor family. Interacts (via periplasmic N-terminus) with FecR (via periplasmic C-terminus).

Its subcellular location is the cell outer membrane. In terms of biological role, fecA is the outer membrane receptor protein in the Fe(3+) dicitrate transport system. This Escherichia coli (strain K12) protein is Fe(3+) dicitrate transport protein FecA (fecA).